A 74-amino-acid chain; its full sequence is Translational regulator CsrA (74 aa).

The protein belongs to the CsrA/RsmA family. As to quaternary structure, homodimer. The beta-strands of each monomer intercalate to form a hydrophobic core while the alpha-helices form wings that extend away from the core. Two molecules of FliW interact with 1 homodimer. mRNA and FliW bind to different sites on CsrA.

The protein localises to the cytoplasm. A translational regulator that binds mRNA to regulate translation initiation and/or mRNA stability. Usually binds in the 5'-UTR at or near the Shine-Dalgarno sequence preventing ribosome-binding, thus repressing translation. Represses expression of flagellin (hag) in a post-transcriptional fashion. Specifically binds to 2 sites in the 5'-UTR of hag mRNA in a cooperative fashion; the second site overlaps the Shine-Dalgarno sequence and prevents 30S ribosomal subunit binding. Mutation of either binding site abolishes CsrA regulation of hag expression. Repression is greater in the 1A96 than 168 genetic background and higher in minimal than rich medium. Translation repression is antagonized by FliW. Partner switching by flagellin between FliW and CsrA provides a flagellar assembly checkpoint to tightly control the timing of flagellin synthesis. Flagellin binds to assembly factor FliW, freeing CsrA to repress translation of the flagellin mRNA. When the flagellar hook is assembled flagellin is secreted, depleting intracellular flagellin, which frees FliW to interact with CsrA and inhibits CsrA binding to mRNA. This derepresses flagellin translation and provides protein for flagellar assembly. Once the flagellar filament is completed cytoplasmic flagellin levels rise and CsrA translation repression of flagellin reinitiates. Overexpression leads to a dramatic reduction in motility, a significant reduction in flagellin synthesis and reduced flagella assembly. In Bacillus subtilis (strain 168), this protein is Translational regulator CsrA.